The following is a 299-amino-acid chain: Epimerase family protein SH2119 (299 aa).

Belongs to the NAD(P)-dependent epimerase/dehydratase family. SDR39U1 subfamily.

In Staphylococcus haemolyticus (strain JCSC1435), this protein is Epimerase family protein SH2119.